The primary structure comprises 836 residues: Spliceosome associated factor 3, U4/U6 recycling protein (836 aa).

HAT repeat units lie at residues 127–163, 296–329, 331–367, 418–451, and 453–486; these read EDFK…YEMS, KLPQ…FERD, RPNE…LLRR, KNMD…LERQ, and GDKE…FERE. The tract at residues 507-585 is disordered; it reads RAIRPQKKVS…APGSFAVQKA (79 aa). Residues 540-550 are compositionally biased toward basic and acidic residues; it reads IVKKVKGDDGG. Over residues 558–579 the composition is skewed to low complexity; sequence SNAKSSSAVSSSNASSTPAPGS. RRM domains lie at 593 to 668 and 683 to 760; these read RTIF…ANDP and SKVF…LSNP. 2 disordered regions span residues 757 to 786 and 811 to 830; these read LSNP…PRKG and AMDV…DQFR. Over residues 816–827 the composition is skewed to polar residues; that stretch reads EGTSTSQPLSND.

In terms of assembly, forms a complex composed of sart-3, terminal uridylyltransferase usip-1 and U6 snRNA; complex formation is mediated by usip-1 and sart-3 binding to U6 snRNA. Associates with U4 and U6 snRNP complexes, probably by interacting with U4 and U6 snRNAs. As to expression, ubiquitously expressed.

Its subcellular location is the nucleus. The protein resides in the nucleoplasm. In terms of biological role, U6 snRNP-binding protein that functions as a recycling factor of the splicing machinery. Promotes the initial reassembly of U4 and U6 snRNPs following their ejection from the spliceosome during its maturation. In Caenorhabditis elegans, this protein is Spliceosome associated factor 3, U4/U6 recycling protein.